The primary structure comprises 482 residues: Glycogen synthase (482 aa).

Lysine 15 contributes to the ADP-alpha-D-glucose binding site.

This sequence belongs to the glycosyltransferase 1 family. Bacterial/plant glycogen synthase subfamily.

The catalysed reaction is [(1-&gt;4)-alpha-D-glucosyl](n) + ADP-alpha-D-glucose = [(1-&gt;4)-alpha-D-glucosyl](n+1) + ADP + H(+). The protein operates within glycan biosynthesis; glycogen biosynthesis. Functionally, synthesizes alpha-1,4-glucan chains using ADP-glucose. The sequence is that of Glycogen synthase from Elusimicrobium minutum (strain Pei191).